The following is a 296-amino-acid chain: Enoyl-CoA hydratase AFT3-1 (296 aa).

The short motif at 294–296 (PKL) is the Peroxisomal targeting signal type 1 element.

The protein belongs to the enoyl-CoA hydratase/isomerase family.

Its subcellular location is the peroxisome. It carries out the reaction a (3S)-3-hydroxyacyl-CoA = a (2E)-enoyl-CoA + H2O. The enzyme catalyses a 4-saturated-(3S)-3-hydroxyacyl-CoA = a (3E)-enoyl-CoA + H2O. It functions in the pathway mycotoxin biosynthesis. Its function is as follows. Enoyl-CoA hydratase; part of the gene clusters that mediate the biosynthesis of the host-selective toxins (HSTs) AF-toxins responsible for Alternaria black spot of strawberry disease by the strawberry pathotype. AF-toxin I and III are valine derivatives of 2,3-dyhydroxy-isovaleric acid and 2-hydroxy-isovaleric acid respectively, while AF II is an isoleucine derivative of 2-hydroxy-valeric acid. These derivatives are bound to a 9,10-epoxy-8-hydroxy-9-methyl-decatrienoic acid (EDA) moiety. On cellular level, AF-toxins affect plasma membrane of susceptible cells and cause a sudden increase in loss of K(+) after a few minutes of toxin treatment. The aldo-keto reductase AFTS1 catalyzes the conversion of 2-keto-isovaleric acid (2-KIV) to 2-hydroxy-isovaleric acid (2-HIV) by reduction of its ketone to an alcohol. The acyl-CoA ligase AFT1, the hydrolase AFT2 and the enoyl-CoA hydratases AFT3 and AFT6, but also the polyketide synthase AFT9, the acyl-CoA dehydrogenase AFT10, the cytochrome P450 monooxygenase AFT11 and the oxidoreductase AFT12 are all involved in the biosynthesis of the AK-, AF- and ACT-toxin common EDA structural moiety. The exact function of each enzyme, and of additional enzymes identified within the AF-toxin clusters have still to be determined. The chain is Enoyl-CoA hydratase AFT3-1 (AFT3-1) from Alternaria alternata (Alternaria rot fungus).